A 345-amino-acid polypeptide reads, in one-letter code: Serine/arginine-rich splicing factor 6 (345 aa).

In terms of domain architecture, RRM 1 spans Met-1–Gly-72. Residues Ser-45, Ser-81, and Ser-84 each carry the phosphoserine modification. The segment at Arg-75 to Tyr-102 is disordered. Residues Phe-110–Pro-183 form the RRM 2 domain. Lys-165 carries the post-translational modification N6-acetyllysine. The tract at residues Ile-176 to Asp-345 is disordered. Lys-182 is covalently cross-linked (Glycyl lysine isopeptide (Lys-Gly) (interchain with G-Cter in SUMO2)). Basic residues predominate over residues Thr-185–Lys-250. 2 stretches are compositionally biased toward basic and acidic residues: residues Arg-264–Arg-273 and Ser-282–Ser-293. Phosphoserine is present on residues Ser-299 and Ser-301. Ser-305 is modified (phosphoserine; by DYRK1A). Residues Ser-316 and Ser-318 each carry the phosphoserine modification. Positions Arg-323 to Asp-345 are enriched in basic residues.

This sequence belongs to the splicing factor SR family. In terms of assembly, binds SREK1/SFRS12. Interacts with DYRK1A. Extensively phosphorylated on serine residues in the RS domain. Phosphorylated by DYRK1A, probably in the RS domain. Phosphorylation by DYRK1A modulates alternative splice site selection and inhibits the expression of MAPT/Tau exon 10.

It localises to the nucleus. Its subcellular location is the nucleus speckle. Plays a role in constitutive splicing and modulates the selection of alternative splice sites. Plays a role in the alternative splicing of MAPT/Tau exon 10. Binds to alternative exons of TNC pre-mRNA and promotes the expression of alternatively spliced TNC. Plays a role in wound healing and in the regulation of keratinocyte differentiation and proliferation via its role in alternative splicing. The sequence is that of Serine/arginine-rich splicing factor 6 (SRSF6) from Bos taurus (Bovine).